The primary structure comprises 682 residues: Potassium-transporting ATPase ATP-binding subunit (682 aa).

The next 4 membrane-spanning stretches (helical) occupy residues 34 to 54, 58 to 78, 219 to 239, and 254 to 274; these read PVMF…LAMV, IAGS…TVLF, IALT…TATL, and VLVA…LSAI. Asp-307 acts as the 4-aspartylphosphate intermediate in catalysis. ATP is bound by residues Asp-344, Glu-348, 377 to 384, and Lys-395; that span reads FTAQSRMS. The Mg(2+) site is built by Asp-518 and Asp-522. 3 consecutive transmembrane segments (helical) span residues 588-608, 616-636, and 662-682; these read FAII…LNVM, AILS…PLAL, and LVVP…LGLA.

Belongs to the cation transport ATPase (P-type) (TC 3.A.3) family. Type IA subfamily. As to quaternary structure, the system is composed of three essential subunits: KdpA, KdpB and KdpC.

It localises to the cell inner membrane. It carries out the reaction K(+)(out) + ATP + H2O = K(+)(in) + ADP + phosphate + H(+). Functionally, part of the high-affinity ATP-driven potassium transport (or Kdp) system, which catalyzes the hydrolysis of ATP coupled with the electrogenic transport of potassium into the cytoplasm. This subunit is responsible for energy coupling to the transport system and for the release of the potassium ions to the cytoplasm. This is Potassium-transporting ATPase ATP-binding subunit from Salmonella paratyphi A (strain ATCC 9150 / SARB42).